Here is a 220-residue protein sequence, read N- to C-terminus: GTP cyclohydrolase 1 (220 aa).

Residues C109, H112, and C180 each coordinate Zn(2+).

This sequence belongs to the GTP cyclohydrolase I family. Homomer.

The enzyme catalyses GTP + H2O = 7,8-dihydroneopterin 3'-triphosphate + formate + H(+). It functions in the pathway cofactor biosynthesis; 7,8-dihydroneopterin triphosphate biosynthesis; 7,8-dihydroneopterin triphosphate from GTP: step 1/1. The chain is GTP cyclohydrolase 1 from Edwardsiella ictaluri (strain 93-146).